A 406-amino-acid polypeptide reads, in one-letter code: Succinylornithine transaminase (406 aa).

Lys-252 carries the post-translational modification N6-(pyridoxal phosphate)lysine.

Belongs to the class-III pyridoxal-phosphate-dependent aminotransferase family. AstC subfamily. Pyridoxal 5'-phosphate is required as a cofactor.

The catalysed reaction is N(2)-succinyl-L-ornithine + 2-oxoglutarate = N-succinyl-L-glutamate 5-semialdehyde + L-glutamate. The protein operates within amino-acid degradation; L-arginine degradation via AST pathway; L-glutamate and succinate from L-arginine: step 3/5. Functionally, catalyzes the transamination of N(2)-succinylornithine and alpha-ketoglutarate into N(2)-succinylglutamate semialdehyde and glutamate. Can also act as an acetylornithine aminotransferase. The chain is Succinylornithine transaminase from Shigella sonnei (strain Ss046).